Consider the following 699-residue polypeptide: MAREYKIEDYRNFGIMAHIDAGKTTTTERILYYTGKSHKIGEVHDGAATMDWMEQEQERGITITSAATTTFWKGRDGKMRRFNIIDTPGHVDFTIEVERSLRVLDGAIALLDANAGVEPQTETVWRQAEKYNVPRMIFCNKMDKTGADFYRSVEMIKTRLGATAVVMQLPIGAESEFKGVVDLIEMNALVWRDESLGAQWDVVEIPADMKDKAEEYREKLIETVVEIDEAAMEAYLEGTYPDNDKIRELVRRGTIDVKFHPMFCGTAFKNKGVQPLLDAVVDYLPSPIDIPAIKGIDVKTEGEITRKADDNEPLSMLAFKIMNDPFVGSLTFARIYSGKLEKGTSVMNTVKEKRERVGRMLQMHSNSREDIEEAFAGDIVALAGLKETTTGDTLCDPLKPVILERMEFPEPVIQIAIEPKTKGDQEKMGLALNRLAAEDPSFRVKTDEESGQTIIAGMGELHLDIIVDRMRREFKVEASVGAPQVAYRETITRQHEEDYTHKKQSGGTGQFARVKIVFEPNPEGEDFAFESKIVGGAVPKEYIPGVQKGIESVLSSGPLAGFPMLGVKATLIDGAFHDVDSSVLAFEIASRACFREAAKKAGAQLLEPIMKVEVVTPEDYVGDVIGDLNSRRGQIQGQESRGVAVVINAHVPLANMFKYVDNLRSMSQGRAQYTMLFDHYAPVPSNVAQEIQAKYSGQK.

In terms of domain architecture, tr-type G spans 8 to 288; sequence EDYRNFGIMA…AVVDYLPSPI (281 aa). GTP-binding positions include 17–24, 86–90, and 140–143; these read AHIDAGKT, DTPGH, and NKMD.

The protein belongs to the TRAFAC class translation factor GTPase superfamily. Classic translation factor GTPase family. EF-G/EF-2 subfamily.

The protein localises to the cytoplasm. In terms of biological role, catalyzes the GTP-dependent ribosomal translocation step during translation elongation. During this step, the ribosome changes from the pre-translocational (PRE) to the post-translocational (POST) state as the newly formed A-site-bound peptidyl-tRNA and P-site-bound deacylated tRNA move to the P and E sites, respectively. Catalyzes the coordinated movement of the two tRNA molecules, the mRNA and conformational changes in the ribosome. The chain is Elongation factor G from Sinorhizobium fredii (strain NBRC 101917 / NGR234).